Consider the following 248-residue polypeptide: Ureidoacrylate amidohydrolase RutB (248 aa).

Asp-41 (proton acceptor) is an active-site residue. Residue Lys-150 is part of the active site. The active-site Nucleophile is the Cys-183.

This sequence belongs to the isochorismatase family. RutB subfamily.

It carries out the reaction (Z)-3-ureidoacrylate + H2O + H(+) = (Z)-3-aminoacrylate + NH4(+) + CO2. It catalyses the reaction (Z)-3-ureidoacrylate + H2O = (Z)-3-aminoacrylate + carbamate + H(+). The enzyme catalyses (Z)-2-methylureidoacrylate + H2O + H(+) = (Z)-2-methylaminoacrylate + NH4(+) + CO2. Its function is as follows. Hydrolyzes ureidoacrylate to form aminoacrylate and carbamate. The carbamate hydrolyzes spontaneously, thereby releasing one of the nitrogen atoms of the pyrimidine ring as ammonia and one of its carbon atoms as CO2. The protein is Ureidoacrylate amidohydrolase RutB of Methylorubrum extorquens (strain CM4 / NCIMB 13688) (Methylobacterium extorquens).